The following is a 347-amino-acid chain: 4-hydroxy-2-oxovalerate aldolase (347 aa).

A Pyruvate carboxyltransferase domain is found at 11-262; that stretch reads PVVVDTTLRD…NPGLDVFKLL (252 aa). 19-20 contributes to the substrate binding site; the sequence is RD. Mn(2+) is bound at residue aspartate 20. Catalysis depends on histidine 23, which acts as the Proton acceptor. Serine 173 and histidine 201 together coordinate substrate. Mn(2+) contacts are provided by histidine 201 and histidine 203. Tyrosine 292 lines the substrate pocket.

This sequence belongs to the 4-hydroxy-2-oxovalerate aldolase family. Homodimer. Can also form a heterotetramer composed of two aldolase (TTHB246) and two dehydrogenase (TTHB247) subunits. Upon complex formation, the aldolase shows a 5-fold increase in substrate affinity, while the dehydrogenase shows a 3-fold decrease; the kcat values of each enzyme are reduced by 2-fold when they are in a complex. Co(2+) serves as cofactor. Ni(2+) is required as a cofactor. Requires Mn(2+) as cofactor.

The enzyme catalyses (S)-4-hydroxy-2-oxopentanoate = acetaldehyde + pyruvate. The catalysed reaction is (S)-4-hydroxy-2-oxohexanoate = propanal + pyruvate. Its activity is regulated as follows. Appears to be allosterically activated by NADH. Its function is as follows. Catalyzes the retro-aldol cleavage of both 4-hydroxy-2-oxopentanoate (HOPA) and 4-hydroxy-2-oxohexanoate (HOHA) to pyruvate and acetaldehyde or propanaldehyde, respectively. The aldehydes produced by this reaction are directly channeled to the dehydrogenase TTHB247, ensuring that these toxic aldehydes are sequestered from cellular components. Is involved in the meta-cleavage pathway for the degradation of aromatic compounds. Appears to be stereospecific since it can cleave (4S)-4-hydroxy-2-oxopentanoate but not the (4R) isomer. Is not able to catalyze the aldol addition of 2-oxobutyrate with acetaldehyde; this indicates that the enzyme is specific for pyruvate as the carbonyl donor. This is 4-hydroxy-2-oxovalerate aldolase from Thermus thermophilus (strain ATCC 27634 / DSM 579 / HB8).